The chain runs to 241 residues: Ureidoacrylate amidohydrolase RutB (241 aa).

D38 serves as the catalytic Proton acceptor. The active site involves K147. C180 functions as the Nucleophile in the catalytic mechanism.

It belongs to the isochorismatase family. RutB subfamily.

It carries out the reaction (Z)-3-ureidoacrylate + H2O + H(+) = (Z)-3-aminoacrylate + NH4(+) + CO2. The catalysed reaction is (Z)-3-ureidoacrylate + H2O = (Z)-3-aminoacrylate + carbamate + H(+). The enzyme catalyses (Z)-2-methylureidoacrylate + H2O + H(+) = (Z)-2-methylaminoacrylate + NH4(+) + CO2. In terms of biological role, hydrolyzes ureidoacrylate to form aminoacrylate and carbamate. The carbamate hydrolyzes spontaneously, thereby releasing one of the nitrogen atoms of the pyrimidine ring as ammonia and one of its carbon atoms as CO2. This chain is Ureidoacrylate amidohydrolase RutB, found in Haliangium ochraceum (strain DSM 14365 / JCM 11303 / SMP-2).